The primary structure comprises 521 residues: Na(+)/H(+) antiporter ApNhaP (521 aa).

The Periplasmic segment spans residues 1-18 (MTIEAAMGEEAIKENLEQ). Residues 19–39 (FLIVLSVSLGVATLSQISSFF) traverse the membrane as a helical segment. Residues 40–41 (RQ) lie on the Cytoplasmic side of the membrane. A helical membrane pass occupies residues 42–62 (IPYTLLLVIVGLGLAFVDIRL). Residues 63–94 (VNLSPELILEIFLPPLLFEAAWNIRWRNLKKN) lie on the Periplasmic side of the membrane. Residues 95 to 115 (LFPVVLLAIIGVVISVVGIGF) traverse the membrane as a helical segment. The Cytoplasmic portion of the chain corresponds to 116–126 (SLNYFSGLSLP). A helical transmembrane segment spans residues 127 to 147 (IALLVGAILAATDPVSVIALF). Residues 148-164 (RELGVGERLTVLMEGES) are Periplasmic-facing. Residues 165–185 (LFNDGVAVVAFSLLVGIPLGT) form a helical membrane-spanning segment. Residues 186 to 194 (QEFSVTNTL) are Cytoplasmic-facing. The chain crosses the membrane as a helical span at residues 195-215 (IQFVTLQGIGIGCGGVIGFGI). At 216–245 (SYLTQRFDLPLVEQSLTLVSAYGTYLITEE) the chain is on the periplasmic side. Residues 246–266 (LGGSGVIGVVTVGLILGNFGS) traverse the membrane as a helical segment. Over 267–276 (RIGMNPRTRL) the chain is Cytoplasmic. Residues 277 to 297 (LVSEFWEFIAFFVNSIVFLLI) form a helical membrane-spanning segment. The Periplasmic portion of the chain corresponds to 298 to 311 (GDQINIRGLADNGQ). Residues 312–332 (LILITIIALVIIRAISIYGLG) form a helical membrane-spanning segment. Over 333–349 (TISNLITKQDISWQEET) the chain is Cytoplasmic. A helical transmembrane segment spans residues 350 to 370 (VLWWGGLRGSVSIALALSVPV). Over 371–380 (MLDGRQDIIE) the chain is Periplasmic. Residues 381–401 (AVFGVVLFTLLVQGLTMQTVI) form a helical membrane-spanning segment. At 402–521 (EKLGLIGDRA…LLQEVLAKPE (120 aa)) the chain is on the cytoplasmic side.

The protein belongs to the monovalent cation:proton antiporter 1 (CPA1) transporter (TC 2.A.36) family.

The protein resides in the cell inner membrane. Na(+)/H(+) antiporter that extrudes sodium in exchange for external protons. Also shows high Ca(2+)/H(+) antiporter activity at alkaline pH. Does not catalyze exchange between Li(+) and H(+). The chain is Na(+)/H(+) antiporter ApNhaP (apnhaP) from Aphanothece halophytica.